A 1274-amino-acid polypeptide reads, in one-letter code: MASGSGDSVTRRSVASQFFTQEEGPGIDGMTTSERVVDLLNQAALITNDSKITVLKQVQELIINKDPTLLDNFLDEIIAFQADKSIEVRKFVIGFIEEACKRDIELLLKLIANLNMLLRDENVNVVKKAILTMTQLYKVALQWMVKSRVISELQEACWDMVSAMAGDIILLLDSDNDGIRTHAIKFVEGLIVTLSPRMADSEIPRRQEHDISLDRIPRDHPYIQYNVLWEEGKAALEQLLKFMVHPAISSINLTTALGSLANIARQRPMFMSEVIQAYETLHANLPPTLAKSQVSSVRKNLKLHLLSVLKHPASLEFQAQITTLLVDLGTPQAEIARNMPSSKDTRKRPRDDSDSTLKKMKLEPNLGEDDEDKDLEPGPSGTSKASAQISGQSDTDITAEFLQPLLTPDNVANLVLISMVYLPEAMPASFQAIYTPVESAGTEAQIKHLARLMATQMTAAGLGPGVEQTKQCKEEPKEEKVVKTESVLIKRRLSAQGQAISVVGSLSSMSPLEEEAPQAKRRPEPIIPVTQPRLAGAGGRKKIFRLSDVLKPLTDAQVEAMKLGAVKRILRAEKAVACSGAAQVRIKILASLVTQFNSGLKAEVLSFILEDVRARLDLAFAWLYQEYNAYLAAGASGSLDKYEDCLIRLLSGLQEKPDQKDGIFTKVVLEAPLITESALEVVRKYCEDESRTYLGMSTLRDLIFKRPSRQFQYLHVLLDLSSHEKDKVRSQALLFIKRMYEKEQLREYVEKFALNYLQLLVHPNPPSVLFGADKDTEVAAPWTEETVKQCLYLYLALLPQNHKLIHELAAVYTEAIADIKRTVLRVIEQPIRGMGMNSPELLLLVENCPKGAETLVTRCLHSLTDKVPPSPELVKRVRDLYHKRLPDVRFLIPVLNGLEKKEVIQALPKLIKLNPIVVKEVFNRLLGTQHGEGNSALSPLNPGELLIALHNIDSVKCDMKSIIKATNLCFAERNVYTSEVLAVVMQQLMEQSPLPMLLMRTVIQSLTMYPRLGGFVMNILSRLIMKQVWKYPKVWEGFIKCCQRTKPQSFQVILQLPPQQLGAVFDKCPELREPLLAHVRSFTPHQQAHIPNSIMTILEASGKQEPEAKEAPAGPLEEDDLEPLTLAPAPAPRPPQDLIGLRLAQEKALKRQLEEEQKLKPGGVGAPSSSSPSPSPSARPGPPPSEEAMDFREEGPECETPGIFISMDDDSGLTEAALLDSSLEGPLPKETAAGGLTLKEERSPQTLAPVGEDAMKTPSPAAEDAREPEAKGNS.

An interaction with HSF1 region spans residues 1-124; it reads MASGSGDSVT…NMLLRDENVN (124 aa). Serine 13 carries the post-translational modification Phosphoserine. HEAT repeat units lie at residues 31-64, 67-101, 104-146, 153-192, and 227-266; these read TTSE…LIIN, PTLL…EACK, IELL…WMVK, LQEA…GLIV, and VLWE…IARQ. The segment at 335 to 392 is disordered; sequence IARNMPSSKDTRKRPRDDSDSTLKKMKLEPNLGEDDEDKDLEPGPSGTSKASAQISGQ. A Nuclear localization signal motif is present at residues 345-360; it reads TRKRPRDDSDSTLKKM. Over residues 349–362 the composition is skewed to basic and acidic residues; the sequence is PRDDSDSTLKKMKL. Lysine 361 is covalently cross-linked (Glycyl lysine isopeptide (Lys-Gly) (interchain with G-Cter in SUMO1); alternate). Lysine 361 is covalently cross-linked (Glycyl lysine isopeptide (Lys-Gly) (interchain with G-Cter in SUMO2); alternate). Over residues 380-392 the composition is skewed to polar residues; that stretch reads SGTSKASAQISGQ. A Glycyl lysine isopeptide (Lys-Gly) (interchain with G-Cter in SUMO2) cross-link involves residue lysine 483. Serine 494 is subject to Phosphoserine. 2 disordered regions span residues 1102–1137 and 1149–1274; these read GKQE…PPQD and LKRQ…KGNS. Positions 1149 to 1159 are enriched in basic and acidic residues; sequence LKRQLEEEQKL. Residues 1173 to 1185 show a composition bias toward pro residues; it reads SPSPSARPGPPPS. Serine 1221 and serine 1222 each carry phosphoserine. Lysine 1239 participates in a covalent cross-link: Glycyl lysine isopeptide (Lys-Gly) (interchain with G-Cter in SUMO1). Residue serine 1243 is modified to Phosphoserine. Threonine 1257 is modified (phosphothreonine). Residue serine 1259 is modified to Phosphoserine. A compositionally biased stretch (basic and acidic residues) spans 1263–1274; sequence EDAREPEAKGNS.

Belongs to the Symplekin family. Found in a heat-sensitive complex at least composed of several cleavage and polyadenylation specific and cleavage stimulation factors. Interacts with CPSF2, CPSF3 and CSTF2. Interacts (via N-terminus) with HSF1; this interaction is direct and occurs upon heat shock. Interacts with SSU72. In testis, expressed in polar epithelia and Sertoli cells but not in vascular endothelia. The protein is detected in stomach, duodenum, pancreas, liver, fetal brain, carcinomas, lens-forming cells, fibroblasts, lymphocytes, lymphoma cells, erythroleukemia cells but not in endothelium of vessels, epidermis, intercalated disks, Purkinje fiber cells of the heart and lymph node.

Its subcellular location is the cytoplasm. The protein localises to the cytoskeleton. It is found in the cell junction. It localises to the tight junction. The protein resides in the cell membrane. Its subcellular location is the nucleus. The protein localises to the nucleoplasm. Scaffold protein that functions as a component of a multimolecular complex involved in histone mRNA 3'-end processing. Specific component of the tight junction (TJ) plaque, but might not be an exclusively junctional component. May have a house-keeping rule. Is involved in pre-mRNA polyadenylation. Enhances SSU72 phosphatase activity. This is Symplekin (SYMPK) from Homo sapiens (Human).